We begin with the raw amino-acid sequence, 180 residues long: UPF0397 protein SSA_0592 (180 aa).

The next 5 helical transmembrane spans lie at 9 to 29 (VVAT…NIPT), 45 to 65 (LFSV…GHAI), 72 to 92 (GGLW…VGFF), 113 to 133 (LIQF…DVIV), and 146 to 166 (IVAI…LLTA).

It belongs to the UPF0397 family.

Its subcellular location is the cell membrane. This is UPF0397 protein SSA_0592 from Streptococcus sanguinis (strain SK36).